Here is a 226-residue protein sequence, read N- to C-terminus: Phosphoribosylformylglycinamidine synthase subunit PurQ (226 aa).

Residues 2 to 226 (KIAVVVFPGS…LENGRIKVEA (225 aa)) form the Glutamine amidotransferase type-1 domain. The Nucleophile role is filled by Cys86. Active-site residues include His195 and Glu197.

Part of the FGAM synthase complex composed of 1 PurL, 1 PurQ and 2 PurS subunits.

The protein resides in the cytoplasm. The enzyme catalyses N(2)-formyl-N(1)-(5-phospho-beta-D-ribosyl)glycinamide + L-glutamine + ATP + H2O = 2-formamido-N(1)-(5-O-phospho-beta-D-ribosyl)acetamidine + L-glutamate + ADP + phosphate + H(+). The catalysed reaction is L-glutamine + H2O = L-glutamate + NH4(+). It participates in purine metabolism; IMP biosynthesis via de novo pathway; 5-amino-1-(5-phospho-D-ribosyl)imidazole from N(2)-formyl-N(1)-(5-phospho-D-ribosyl)glycinamide: step 1/2. Functionally, part of the phosphoribosylformylglycinamidine synthase complex involved in the purines biosynthetic pathway. Catalyzes the ATP-dependent conversion of formylglycinamide ribonucleotide (FGAR) and glutamine to yield formylglycinamidine ribonucleotide (FGAM) and glutamate. The FGAM synthase complex is composed of three subunits. PurQ produces an ammonia molecule by converting glutamine to glutamate. PurL transfers the ammonia molecule to FGAR to form FGAM in an ATP-dependent manner. PurS interacts with PurQ and PurL and is thought to assist in the transfer of the ammonia molecule from PurQ to PurL. The polypeptide is Phosphoribosylformylglycinamidine synthase subunit PurQ (Limosilactobacillus reuteri (strain DSM 20016) (Lactobacillus reuteri)).